The following is an 81-amino-acid chain: MSHSVKIYDTCIGCTQCVRACPLDVLEMVPWDGCKAAQIASSPRTEDCIGCKRCETACPTDFLSIRVYLGAETTRSMGLAY.

2 consecutive 4Fe-4S ferredoxin-type domains span residues 1-31 (MSHS…MVPW) and 39-68 (IASS…IRVY). [4Fe-4S] cluster is bound by residues cysteine 11, cysteine 14, cysteine 17, cysteine 21, cysteine 48, cysteine 51, cysteine 54, and cysteine 58.

In terms of assembly, the cyanobacterial PSI reaction center is composed of one copy each of PsaA,B,C,D,E,F,I,J,K,L,M and X, and forms trimeric complexes. Requires [4Fe-4S] cluster as cofactor.

It is found in the cellular thylakoid membrane. It carries out the reaction reduced [plastocyanin] + hnu + oxidized [2Fe-2S]-[ferredoxin] = oxidized [plastocyanin] + reduced [2Fe-2S]-[ferredoxin]. Functionally, apoprotein for the two 4Fe-4S centers FA and FB of photosystem I (PSI); essential for photochemical activity. FB is the terminal electron acceptor of PSI, donating electrons to ferredoxin. The C-terminus interacts with PsaA/B/D and helps assemble the protein into the PSI complex. Required for binding of PsaD and PsaE to PSI. PSI is a plastocyanin/cytochrome c6-ferredoxin oxidoreductase, converting photonic excitation into a charge separation, which transfers an electron from the donor P700 chlorophyll pair to the spectroscopically characterized acceptors A0, A1, FX, FA and FB in turn. This Microcystis aeruginosa (strain NIES-843 / IAM M-2473) protein is Photosystem I iron-sulfur center.